The chain runs to 232 residues: Probable fimbrial chaperone LpfB (232 aa).

An N-terminal signal peptide occupies residues 1–24; sequence MDRMMKSKFVALALSLFLSQSVLA.

The protein belongs to the periplasmic pilus chaperone family.

Its subcellular location is the periplasm. Part of the lpfABCC'DE fimbrial operon. LP fimbriae may participate in the interaction with eukaryotic cells by assisting in microcolony formation. The chain is Probable fimbrial chaperone LpfB (lpfB) from Escherichia coli O157:H7.